We begin with the raw amino-acid sequence, 311 residues long: Homeobox-leucine zipper protein HOX13 (311 aa).

Positions 1–74 (MKRPTSSSRK…PSCGLGEKKR (74 aa)) are disordered. Residues 35–54 (DEAEMEEVDEEEEEEVDEDM) are compositionally biased toward acidic residues. Positions 69–128 (LGEKKRRLALEQVRALERSFDTDNKLDPDRKARIARDLGLQPRQVAVWFQNRRARWKTKQ) form a DNA-binding region, homeobox. A leucine-zipper region spans residues 127-171 (KQLERDFAALRARHDALRADCDALRRDKDALAAEIRELREKLPTK).

This sequence belongs to the HD-ZIP homeobox family. Class I subfamily. As to expression, expressed in seedlings, roots, stems, leaf sheaths and blades and panicles.

It is found in the nucleus. Probable transcription factor. The polypeptide is Homeobox-leucine zipper protein HOX13 (HOX13) (Oryza sativa subsp. japonica (Rice)).